Consider the following 427-residue polypeptide: Glutamate-1-semialdehyde 2,1-aminomutase (427 aa).

The residue at position 268 (lysine 268) is an N6-(pyridoxal phosphate)lysine.

It belongs to the class-III pyridoxal-phosphate-dependent aminotransferase family. HemL subfamily. Pyridoxal 5'-phosphate is required as a cofactor.

The protein localises to the cytoplasm. It carries out the reaction (S)-4-amino-5-oxopentanoate = 5-aminolevulinate. Its pathway is porphyrin-containing compound metabolism; protoporphyrin-IX biosynthesis; 5-aminolevulinate from L-glutamyl-tRNA(Glu): step 2/2. This Methanococcus maripaludis (strain C6 / ATCC BAA-1332) protein is Glutamate-1-semialdehyde 2,1-aminomutase.